The chain runs to 131 residues: D-ribose pyranase (131 aa).

Catalysis depends on His20, which acts as the Proton donor. Substrate is bound by residues Asp28, His98, and 120-122 (YAN).

This sequence belongs to the RbsD / FucU family. RbsD subfamily. In terms of assembly, homodecamer.

The protein resides in the cytoplasm. It catalyses the reaction beta-D-ribopyranose = beta-D-ribofuranose. Its pathway is carbohydrate metabolism; D-ribose degradation; D-ribose 5-phosphate from beta-D-ribopyranose: step 1/2. Its function is as follows. Catalyzes the interconversion of beta-pyran and beta-furan forms of D-ribose. The protein is D-ribose pyranase of Bacillus cereus (strain 03BB102).